The sequence spans 337 residues: Cytoskeleton protein RodZ (337 aa).

At 1-111 (MNTEATHDQN…LGKRRKKRDG (111 aa)) the chain is on the cytoplasmic side. The region spanning 19–71 (LRNAREQLGLSQQAVAERLCLKVSTVRDIEEDKAPADLASTFLRGYIRSYARL) is the HTH cro/C1-type domain. Positions 30 to 49 (QQAVAERLCLKVSTVRDIEE) form a DNA-binding region, H-T-H motif. The chain crosses the membrane as a helical; Signal-anchor for type II membrane protein span at residues 112 to 132 (WLMTFTWLVLFVVIGLSGAWW). The Periplasmic segment spans residues 133-337 (WQDRKAQQEE…TLNAEQSPAQ (205 aa)). Residues 144 to 167 (TTMADQSSAELSSNSEQGQSVPLN) show a composition bias toward polar residues. The tract at residues 144–235 (TTMADQSSAE…PTAATTPDGA (92 aa)) is disordered. A compositionally biased stretch (low complexity) spans 168–207 (TSTTTDPATTSTPPASVDTTATNTQTPAVTAPAPAVDPQQ). Polar residues predominate over residues 208–218 (NAVVSPSQANV). Low complexity predominate over residues 219 to 235 (DTAATPAPTAATTPDGA).

The protein belongs to the RodZ family.

It localises to the cell inner membrane. Cytoskeletal protein that is involved in cell-shape control through regulation of the length of the long axis. The sequence is that of Cytoskeleton protein RodZ from Escherichia coli (strain K12 / MC4100 / BW2952).